Here is a 345-residue protein sequence, read N- to C-terminus: MVHNKNNTILKMIKGEETTHTPVWFMRQAGRSQPEYRKLKEKYSLFDITHQPELCAYVTHLPVDNYHTDAAILYKDIMTPLKPIGVDVEIKSGIGPVIHNPIKTIQDVEKLSQIDPERDVPYVLDTIKLLTEEKLNVPLIGFTGAPFTLASYMIEGGPSKNYNFTKAMMYRDEATWFALMNHLVDVSVKYVTAQVEAGAELIQIFDSWVGALNVEDYRRYIKPHMIRLISEVKEKHDVPVILFGVGASHLINEWNDLPIDVLGLDWRTSINQAQQLGVTKTLQGNLDPSILLAPWNVIEERLKPILDQGMENGKHIFNLGHGVFPEVQPETLRKVSGFVHTYTQR.

Substrate contacts are provided by residues 27–31 (RQAGR), Phe-46, Asp-76, Tyr-152, Ser-207, and His-321.

This sequence belongs to the uroporphyrinogen decarboxylase family. Homodimer.

The protein localises to the cytoplasm. It catalyses the reaction uroporphyrinogen III + 4 H(+) = coproporphyrinogen III + 4 CO2. Its pathway is porphyrin-containing compound metabolism; protoporphyrin-IX biosynthesis; coproporphyrinogen-III from 5-aminolevulinate: step 4/4. Its function is as follows. Catalyzes the decarboxylation of four acetate groups of uroporphyrinogen-III to yield coproporphyrinogen-III. The sequence is that of Uroporphyrinogen decarboxylase from Staphylococcus aureus (strain MRSA252).